The sequence spans 313 residues: Nematocyst expressed protein 8 (313 aa).

A signal peptide spans 1–19 (MLRRPLLLVLFTVFSTLYA). The interval 24–56 (GVSPPTNESEAEVSPGDDEGPPEPGNEPDVNWR) is disordered. Acidic residues predominate over residues 32–44 (SEAEVSPGDDEGP). ShKT domains lie at 65–99 (CKDKGKDCESLADEGNCLKKLNYAVGNCPWTCRFC), 109–145 (CKDLAGERHCNGWKVKGDCVRLPDYMMQNCKLSCELC), and 151–186 (FKYTDEDVRCPEWAQAGYCSTNTDINLKCPHSCRKY). Intrachain disulfides connect cysteine 65/cysteine 99, cysteine 72/cysteine 92, cysteine 81/cysteine 96, cysteine 109/cysteine 145, cysteine 127/cysteine 142, cysteine 160/cysteine 179, and cysteine 169/cysteine 183. A compositionally biased stretch (low complexity) spans 222–244 (TAAPSTQPAETTKAPPNTAAPTA). The segment at 222 to 313 (TAAPSTQPAE…LCDEKHSSQQ (92 aa)) is disordered. Over residues 245–265 (APTPAPTPAPAPAPTPAPVAP) the composition is skewed to pro residues. Over residues 280-297 (TPEEQDDNSADESTEIEA) the composition is skewed to acidic residues.

Belongs to the NEP3 family. As to expression, nematocytes. In late planulae, is only expressed in a handful of nematocytes in the lower pharynx. Is absent from the tentacles and outer body wall.

The protein resides in the nematocyst. Its subcellular location is the secreted. Probable toxin probably only used for predation. The protein is Nematocyst expressed protein 8 of Nematostella vectensis (Starlet sea anemone).